The primary structure comprises 128 residues: Small ribosomal subunit protein uS9 (128 aa).

This sequence belongs to the universal ribosomal protein uS9 family. As to quaternary structure, part of the 30S ribosomal subunit. Contacts proteins S7 and S10.

In terms of biological role, part of the top of the head of the 30S subunit. The C-terminal region penetrates the head emerging in the P-site where it contacts tRNA. This Thermus thermophilus (strain ATCC BAA-163 / DSM 7039 / HB27) protein is Small ribosomal subunit protein uS9 (rpsI).